The sequence spans 165 residues: Transcription factor E (165 aa).

One can recognise an HTH TFE/IIEalpha-type domain in the interval 5-87 (NDPVVRGYLL…LWQLDLSDIE (83 aa)).

It belongs to the TFE family. Monomer. Interaction with RNA polymerase subunits RpoF and RpoE is necessary for Tfe stimulatory transcription activity. Able to interact with Tbp and RNA polymerase in the absence of DNA promoter. Interacts both with the preinitiation and elongation complexes.

Its function is as follows. Transcription factor that plays a role in the activation of archaeal genes transcribed by RNA polymerase. Facilitates transcription initiation by enhancing TATA-box recognition by TATA-box-binding protein (Tbp), and transcription factor B (Tfb) and RNA polymerase recruitment. Not absolutely required for transcription in vitro, but particularly important in cases where Tbp or Tfb function is not optimal. It dynamically alters the nucleic acid-binding properties of RNA polymerases by stabilizing the initiation complex and destabilizing elongation complexes. Seems to translocate with the RNA polymerase following initiation and acts by binding to the non template strand of the transcription bubble in elongation complexes. The sequence is that of Transcription factor E from Methanococcoides burtonii (strain DSM 6242 / NBRC 107633 / OCM 468 / ACE-M).